The following is a 301-amino-acid chain: Syntaxin-17 (301 aa).

N-acetylserine is present on Ser2. At 2–227 (SEDEEKVKLR…KNLQKAAKYK (226 aa)) the chain is on the cytoplasmic side. Position 41 is an N6-acetyllysine (Lys41). Positions 49–128 (DKLHEEHINA…QVNDEELLQP (80 aa)) form a coiled coil. Tyr156 carries the phosphotyrosine; by ABL1 modification. The t-SNARE coiled-coil homology domain occupies 161 to 223 (IPQDQNAAES…EEGTKNLQKA (63 aa)). A helical transmembrane segment spans residues 228 to 248 (LAALPVAGALIGGVVGGPIGL). The tract at residues 228–274 (LAALPVAGALIGGVVGGPIGLLAGFKVAGIAAALGGGVLGFTGGKLI) is necessary and sufficient for localization to autophagosome. The Lumenal portion of the chain corresponds to 249–253 (LAGFK). A helical transmembrane segment spans residues 254-274 (VAGIAAALGGGVLGFTGGKLI). Residues 275–301 (QRRKQKMMEKLTSSCPDLPSQSDKKRS) lie on the Cytoplasmic side of the membrane. Ser288 is modified (phosphoserine). The Endoplasmic reticulum retention signal signature appears at 298–301 (KKRS).

It belongs to the syntaxin family. Forms a SNARE complex composed of VAMP8, SNAP29 and STX17 involved in fusion of autophagosome with lysosome. May interact with VTI1B. Probably interacts with BET1, SCFD1 and SEC22B. Interacts with PTPN2 and ABL1; involved in STX17 phosphorylation. Interacts with COPB1. Interacts with TMED9 and TMED10; the interaction is direct. Interacts with VAMP7. Interacts with RUBCNL/PACER; promoting targeting of RUBCNL/PACER to autophagosome. Interacts with VAMP8, SNAP29, VPS39 and VPS41; these interactions are increased in the absence of TMEM39A. Interacts with IRGM; promoting STX17 recruitment to autophagosomes. Interacts with ATG8 proteins GABARAP and MAP1LC3B. Interacts with RNF115; this interaction enhances STX17 stability which in turn promotes autophagosome maturation. Interacts with RAB39A (GTP-bound); the interaction promotes autophagosome-lysosome membrane fusion driven by STX17-SNAP29-VAMP8. Interacts with RAB39B; the interaction may promote a different fonction in autophagy as compared with RAB39A. In terms of processing, dephosphorylation by PTPN2; regulates exit from the endoplasmic reticulum. Phosphorylated at Tyr-156 probably by ABL1.

It is found in the endoplasmic reticulum membrane. It localises to the smooth endoplasmic reticulum membrane. Its subcellular location is the endoplasmic reticulum-Golgi intermediate compartment membrane. The protein resides in the cytoplasmic vesicle. The protein localises to the autophagosome membrane. It is found in the COPII-coated vesicle membrane. It localises to the cytoplasm. Its subcellular location is the cytosol. The protein resides in the mitochondrion membrane. The protein localises to the autolysosome membrane. Functionally, SNAREs, soluble N-ethylmaleimide-sensitive factor-attachment protein receptors, are essential proteins for fusion of cellular membranes. SNAREs localized on opposing membranes assemble to form a trans-SNARE complex, an extended, parallel four alpha-helical bundle that drives membrane fusion. STX17 is a SNARE of the autophagosome involved in autophagy through the direct control of autophagosome membrane fusion with the lysosome membrane. May also play a role in the early secretory pathway where it may maintain the architecture of the endoplasmic reticulum-Golgi intermediate compartment/ERGIC and Golgi and/or regulate transport between the endoplasmic reticulum, the ERGIC and the Golgi. This chain is Syntaxin-17, found in Mus musculus (Mouse).